The primary structure comprises 227 residues: Orotidine 5'-phosphate decarboxylase (227 aa).

Substrate-binding positions include Asp8, Lys30, 59–68 (DLKLYDIPYT), Thr118, Arg178, Gln187, Gly207, and Arg208. Residue Lys61 is the Proton donor of the active site.

Belongs to the OMP decarboxylase family. Type 1 subfamily. Homodimer.

The catalysed reaction is orotidine 5'-phosphate + H(+) = UMP + CO2. The protein operates within pyrimidine metabolism; UMP biosynthesis via de novo pathway; UMP from orotate: step 2/2. Functionally, catalyzes the decarboxylation of orotidine 5'-monophosphate (OMP) to uridine 5'-monophosphate (UMP). The polypeptide is Orotidine 5'-phosphate decarboxylase (Helicobacter pylori (strain J99 / ATCC 700824) (Campylobacter pylori J99)).